We begin with the raw amino-acid sequence, 765 residues long: E3 ubiquitin-protein ligase SlrP (765 aa).

The segment at M1 to F451 is interaction with target proteins. LRR repeat units follow at residues Q200 to Q219, N221 to T242, I243 to S262, A263 to E284, L285 to G305, I306 to P325, G326 to P346, E347 to T368, I369 to A389, and L390 to F410. A linker region spans residues A452–V461. The interval T462–R765 is E3 ubiquitin-protein ligase catalytic domain. One can recognise an NEL domain in the interval P464–S758. The active-site Glycyl thioester intermediate is the C546.

This sequence belongs to the LRR-containing bacterial E3 ligase family. As to quaternary structure, interacts with host TXN. In terms of processing, ubiquitinated in the presence of host E1 ubiquitin-activating enzyme, E2 ubiquitin-conjugating enzyme and ubiquitin.

Its subcellular location is the secreted. The protein localises to the host cytoplasm. It carries out the reaction S-ubiquitinyl-[E2 ubiquitin-conjugating enzyme]-L-cysteine + [acceptor protein]-L-lysine = [E2 ubiquitin-conjugating enzyme]-L-cysteine + N(6)-ubiquitinyl-[acceptor protein]-L-lysine.. Its activity is regulated as follows. Binding to TXN is inhibited by hydrogen peroxide in vitro. In terms of biological role, effector proteins function to alter host cell physiology and promote bacterial survival in host tissues. This protein is an E3 ubiquitin ligase that interferes with host's ubiquitination pathway. Can ubiquitinate both ubiquitin and host TXN (thioredoxin). Leads to significant decrease of thioredoxin activity and increase of host cell death. In Salmonella typhimurium (strain LT2 / SGSC1412 / ATCC 700720), this protein is E3 ubiquitin-protein ligase SlrP (slrP).